A 248-amino-acid polypeptide reads, in one-letter code: Triosephosphate isomerase (248 aa).

Position 4 is a phosphothreonine (Thr4). 2 residues coordinate substrate: Asn10 and Lys12. A Phosphoserine modification is found at Ser71. His95 serves as the catalytic Electrophile. The active-site Proton acceptor is the Glu165. Ser215 carries the post-translational modification Phosphoserine. Lys223 is covalently cross-linked (Glycyl lysine isopeptide (Lys-Gly) (interchain with G-Cter in ubiquitin)).

This sequence belongs to the triosephosphate isomerase family. As to quaternary structure, homodimer.

The catalysed reaction is D-glyceraldehyde 3-phosphate = dihydroxyacetone phosphate. Its pathway is carbohydrate biosynthesis; gluconeogenesis. It functions in the pathway carbohydrate degradation; glycolysis; D-glyceraldehyde 3-phosphate from glycerone phosphate: step 1/1. The polypeptide is Triosephosphate isomerase (TPI1) (Saccharomyces cerevisiae (strain ATCC 204508 / S288c) (Baker's yeast)).